Reading from the N-terminus, the 256-residue chain is Probable hydroxyacylglutathione hydrolase SPCC13B11.03c (256 aa).

6 residues coordinate Zn(2+): His-63, His-65, Asp-67, His-68, His-118, and Asp-139. Substrate contacts are provided by residues 148–150, 178–180, and 250–253; these read RFF, HEY, and RTLK. His-178 is a binding site for Zn(2+).

The protein belongs to the metallo-beta-lactamase superfamily. Glyoxalase II family. Zn(2+) is required as a cofactor.

The protein localises to the cytoplasm. It is found in the nucleus. It catalyses the reaction an S-(2-hydroxyacyl)glutathione + H2O = a 2-hydroxy carboxylate + glutathione + H(+). The enzyme catalyses (R)-S-lactoylglutathione + H2O = (R)-lactate + glutathione + H(+). The protein operates within secondary metabolite metabolism; methylglyoxal degradation; (R)-lactate from methylglyoxal: step 2/2. Thiolesterase that catalyzes the hydrolysis of S-D-lactoylglutathione to form glutathione and D-lactic acid. Involved in the metabolism of methylglyoxal, a toxic compound for yeast proliferation, by converting methylglyoxal to lactate via S-D-lactoylglutathione by sequential enzyme reactions catalyzed by glyoxalase I and glyoxalase II. This Schizosaccharomyces pombe (strain 972 / ATCC 24843) (Fission yeast) protein is Probable hydroxyacylglutathione hydrolase SPCC13B11.03c.